The primary structure comprises 180 residues: Large ribosomal subunit protein uL5 (180 aa).

Belongs to the universal ribosomal protein uL5 family. As to quaternary structure, part of the 50S ribosomal subunit; part of the 5S rRNA/L5/L18/L25 subcomplex. Contacts the 5S rRNA and the P site tRNA. Forms a bridge to the 30S subunit in the 70S ribosome.

Its function is as follows. This is one of the proteins that bind and probably mediate the attachment of the 5S RNA into the large ribosomal subunit, where it forms part of the central protuberance. In the 70S ribosome it contacts protein S13 of the 30S subunit (bridge B1b), connecting the 2 subunits; this bridge is implicated in subunit movement. Contacts the P site tRNA; the 5S rRNA and some of its associated proteins might help stabilize positioning of ribosome-bound tRNAs. This Lactobacillus delbrueckii subsp. bulgaricus (strain ATCC 11842 / DSM 20081 / BCRC 10696 / JCM 1002 / NBRC 13953 / NCIMB 11778 / NCTC 12712 / WDCM 00102 / Lb 14) protein is Large ribosomal subunit protein uL5.